A 382-amino-acid polypeptide reads, in one-letter code: MQTTCEICEVPAHGIHFGAITCRGCAAFFRRAVNTKTNRKSCKYSSNCTNFTGKFPQCKSCRMRKCIKMGMMPEKVKVMQPISQSLEIFVSRPNLILFTNNYDKTRNYIDVSNLITRGLEILKQGFPTPLGIGKTNLERMASGVEFSTAESKIVDVVTGKSVSMVWEFDFISTAKWLTRLQDFCTLPMRIQMQLLQTIWHVWSRMYKVVKSSELRKKHADSSNLFQVLDQFHVNLGTTKLDVSWLTTYSYEEIKYFLYGIDDDIYLQSAITAASKLELTDVELTYMAAQTCFQYAQNRFAGTEIAEVCAKFQEILANDLHTYYTKDHKRTSNYAGKLSQMLKCVQEIQKSIRTTRERTTIARTFDIYITDFSNPEMFIDSGC.

The nuclear receptor DNA-binding region spans 2–78 (QTTCEICEVP…MGMMPEKVKV (77 aa)). NR C4-type zinc fingers lie at residues 5–25 (CEIC…CRGC) and 42–61 (CKYS…CKSC). An NR LBD domain is found at 110–380 (DVSNLITRGL…FSNPEMFIDS (271 aa)).

Belongs to the nuclear hormone receptor family.

It is found in the nucleus. Orphan nuclear receptor. This chain is Nuclear hormone receptor family member nhr-106 (nhr-106), found in Caenorhabditis elegans.